The chain runs to 386 residues: Glyceraldehyde-3-phosphate dehydrogenase, chloroplastic (386 aa).

A chloroplast-targeting transit peptide spans 1-45; that stretch reads MAYFKAVAYLAALASAAAFNPGSSFVPRLNAPATQPKAAKMTGPT. NADP(+) is bound by residues 58–59 and Arg125; that span reads RI. Residues 197-199, Thr228, 257-258, and Arg280 contribute to the D-glyceraldehyde 3-phosphate site; these read SCT and TG. The Nucleophile role is filled by Cys198. Residue Asn362 coordinates NADP(+).

Belongs to the glyceraldehyde-3-phosphate dehydrogenase family. In terms of assembly, homotetramer.

It is found in the plastid. It localises to the chloroplast. The enzyme catalyses D-glyceraldehyde 3-phosphate + phosphate + NADP(+) = (2R)-3-phospho-glyceroyl phosphate + NADPH + H(+). The catalysed reaction is D-glyceraldehyde 3-phosphate + phosphate + NAD(+) = (2R)-3-phospho-glyceroyl phosphate + NADH + H(+). The protein operates within carbohydrate biosynthesis; Calvin cycle. This Guillardia theta (Cryptophyte) protein is Glyceraldehyde-3-phosphate dehydrogenase, chloroplastic (GAPC1).